The primary structure comprises 104 residues: Large ribosomal subunit protein bL21 (104 aa).

The protein belongs to the bacterial ribosomal protein bL21 family. Part of the 50S ribosomal subunit. Contacts protein L20.

Functionally, this protein binds to 23S rRNA in the presence of protein L20. This is Large ribosomal subunit protein bL21 from Clostridium botulinum (strain ATCC 19397 / Type A).